Consider the following 119-residue polypeptide: Ribosome-binding factor A (119 aa).

It belongs to the RbfA family. As to quaternary structure, monomer. Binds 30S ribosomal subunits, but not 50S ribosomal subunits or 70S ribosomes.

It is found in the cytoplasm. One of several proteins that assist in the late maturation steps of the functional core of the 30S ribosomal subunit. Associates with free 30S ribosomal subunits (but not with 30S subunits that are part of 70S ribosomes or polysomes). Required for efficient processing of 16S rRNA. May interact with the 5'-terminal helix region of 16S rRNA. This Chlorobium luteolum (strain DSM 273 / BCRC 81028 / 2530) (Pelodictyon luteolum) protein is Ribosome-binding factor A.